We begin with the raw amino-acid sequence, 204 residues long: Somatotropin (204 aa).

A signal peptide spans 1–17 (MDRAVLLLSVLSLGVSS). Pyrrolidone carboxylic acid is present on Gln18. His35 is a binding site for Zn(2+). An intrachain disulfide couples Cys69 to Cys177. Glu186 contributes to the Zn(2+) binding site. An intrachain disulfide couples Cys194 to Cys202.

This sequence belongs to the somatotropin/prolactin family.

The protein localises to the secreted. In terms of biological role, growth hormone plays an important role in growth control and is involved in the regulation of several anabolic processes. Implicated as an osmoregulatory substance important for seawater adaptation. The sequence is that of Somatotropin (gh) from Morone saxatilis (Striped bass).